The chain runs to 149 residues: Ribonuclease H (149 aa).

The RNase H type-1 domain maps to Gln-5 to Ala-146. Positions 14, 52, 74, and 138 each coordinate Mg(2+).

It belongs to the RNase H family. In terms of assembly, monomer. Requires Mg(2+) as cofactor.

Its subcellular location is the cytoplasm. The catalysed reaction is Endonucleolytic cleavage to 5'-phosphomonoester.. Its function is as follows. Endonuclease that specifically degrades the RNA of RNA-DNA hybrids. The polypeptide is Ribonuclease H (Afipia carboxidovorans (strain ATCC 49405 / DSM 1227 / KCTC 32145 / OM5) (Oligotropha carboxidovorans)).